Reading from the N-terminus, the 321-residue chain is Ferredoxin--NADP reductase (321 aa).

FAD contacts are provided by Asp28, Gln36, Tyr41, Ala81, Phe115, Asp274, and Ser315.

It belongs to the ferredoxin--NADP reductase type 2 family. Homodimer. The cofactor is FAD.

It carries out the reaction 2 reduced [2Fe-2S]-[ferredoxin] + NADP(+) + H(+) = 2 oxidized [2Fe-2S]-[ferredoxin] + NADPH. The polypeptide is Ferredoxin--NADP reductase (Frankia casuarinae (strain DSM 45818 / CECT 9043 / HFP020203 / CcI3)).